We begin with the raw amino-acid sequence, 975 residues long: Exocyst complex component 4 (975 aa).

At alanine 2 the chain carries N-acetylalanine. An N6-acetyllysine modification is found at lysine 9. Residue serine 32 is modified to Phosphoserine. Residues serine 32 to leucine 114 adopt a coiled-coil conformation. The segment covering arginine 211–aspartate 224 has biased composition (basic and acidic residues). The tract at residues arginine 211 to leucine 230 is disordered. Residue serine 226 is modified to Phosphoserine. Threonine 238 is modified (phosphothreonine). The residue at position 469 (serine 469) is a Phosphoserine.

The protein belongs to the SEC8 family. As to quaternary structure, the exocyst complex is composed of EXOC1, EXOC2, EXOC3, EXOC4, EXOC5, EXOC6, EXOC7 and EXOC8. Interacts with BIRC6/bruce. Interacts with MYRIP. Interacts with SH3BP1; required for the localization of both SH3BP1 and the exocyst to the leading edge of migrating cells. Interacts with SLC6A9. In terms of tissue distribution, expressed in the striatum (at protein level).

It is found in the midbody. It localises to the midbody ring. The protein localises to the cell projection. The protein resides in the cytoplasm. Its subcellular location is the cytoskeleton. It is found in the microtubule organizing center. It localises to the centrosome. Functionally, component of the exocyst complex involved in the docking of exocytic vesicles with fusion sites on the plasma membrane. This is Exocyst complex component 4 (Exoc4) from Mus musculus (Mouse).